Reading from the N-terminus, the 210-residue chain is Large ribosomal subunit protein uL4 (210 aa).

Residues 41–52 (MNNARQGTASSK) are compositionally biased toward polar residues. The tract at residues 41–80 (MNNARQGTASSKTRSEVRGGGRKPWRQKGTGRARAGSSRS) is disordered. The segment covering 60-71 (GGRKPWRQKGTG) has biased composition (basic residues).

Belongs to the universal ribosomal protein uL4 family. Part of the 50S ribosomal subunit.

One of the primary rRNA binding proteins, this protein initially binds near the 5'-end of the 23S rRNA. It is important during the early stages of 50S assembly. It makes multiple contacts with different domains of the 23S rRNA in the assembled 50S subunit and ribosome. In terms of biological role, forms part of the polypeptide exit tunnel. In Acaryochloris marina (strain MBIC 11017), this protein is Large ribosomal subunit protein uL4.